Consider the following 155-residue polypeptide: uncharacterized protein (155 aa).

The segment at 135-155 (SQANSKNDSNSKDDLPNPFSV) is disordered.

This is an uncharacterized protein from Acidianus convivator (ATV).